The following is a 200-amino-acid chain: Glycerol-3-phosphate acyltransferase (200 aa).

5 helical membrane passes run 1–21, 51–71, 84–104, 116–136, and 159–179; these read MITV…FAVV, VAAA…VVVA, VIAS…FLAF, ILLG…IIVA, and FLLQ…LLIL.

It belongs to the PlsY family. In terms of assembly, probably interacts with PlsX.

The protein localises to the cell inner membrane. It catalyses the reaction an acyl phosphate + sn-glycerol 3-phosphate = a 1-acyl-sn-glycero-3-phosphate + phosphate. The protein operates within lipid metabolism; phospholipid metabolism. In terms of biological role, catalyzes the transfer of an acyl group from acyl-phosphate (acyl-PO(4)) to glycerol-3-phosphate (G3P) to form lysophosphatidic acid (LPA). This enzyme utilizes acyl-phosphate as fatty acyl donor, but not acyl-CoA or acyl-ACP. The protein is Glycerol-3-phosphate acyltransferase of Nitrosomonas eutropha (strain DSM 101675 / C91 / Nm57).